A 147-amino-acid chain; its full sequence is 3-dehydroquinate dehydratase (147 aa).

Tyr23 acts as the Proton acceptor in catalysis. Residues Asn74, His80, and Asp87 each coordinate substrate. His100 functions as the Proton donor in the catalytic mechanism. Substrate is bound by residues 101-102 and Arg111; that span reads IS.

This sequence belongs to the type-II 3-dehydroquinase family. In terms of assembly, homododecamer.

The enzyme catalyses 3-dehydroquinate = 3-dehydroshikimate + H2O. The protein operates within metabolic intermediate biosynthesis; chorismate biosynthesis; chorismate from D-erythrose 4-phosphate and phosphoenolpyruvate: step 3/7. Its function is as follows. Catalyzes a trans-dehydration via an enolate intermediate. This Bacillus pumilus (strain SAFR-032) protein is 3-dehydroquinate dehydratase.